The following is a 322-amino-acid chain: Anthranilate phosphoribosyltransferase (322 aa).

Residues G71, G74 to D75, T79, N81 to T84, K99 to G107, and A111 each bind 5-phospho-alpha-D-ribose 1-diphosphate. G71 provides a ligand contact to anthranilate. A Mg(2+)-binding site is contributed by S83. N102 provides a ligand contact to anthranilate. Residue R157 coordinates anthranilate. D215 and E216 together coordinate Mg(2+).

Belongs to the anthranilate phosphoribosyltransferase family. In terms of assembly, homodimer. It depends on Mg(2+) as a cofactor.

The enzyme catalyses N-(5-phospho-beta-D-ribosyl)anthranilate + diphosphate = 5-phospho-alpha-D-ribose 1-diphosphate + anthranilate. It functions in the pathway amino-acid biosynthesis; L-tryptophan biosynthesis; L-tryptophan from chorismate: step 2/5. In terms of biological role, catalyzes the transfer of the phosphoribosyl group of 5-phosphorylribose-1-pyrophosphate (PRPP) to anthranilate to yield N-(5'-phosphoribosyl)-anthranilate (PRA). This is Anthranilate phosphoribosyltransferase from Thermoplasma acidophilum (strain ATCC 25905 / DSM 1728 / JCM 9062 / NBRC 15155 / AMRC-C165).